Reading from the N-terminus, the 236-residue chain is Uridylate kinase (236 aa).

12–15 (KLSG) provides a ligand contact to ATP. Residues 20–25 (GEKGFG) form an involved in allosteric activation by GTP region. Position 54 (G54) interacts with UMP. The ATP site is built by G55 and R59. UMP contacts are provided by residues D72 and 133–140 (TGNPYFST). Residues N161, Y166, and D169 each contribute to the ATP site.

The protein belongs to the UMP kinase family. In terms of assembly, homohexamer.

It localises to the cytoplasm. It catalyses the reaction UMP + ATP = UDP + ADP. The protein operates within pyrimidine metabolism; CTP biosynthesis via de novo pathway; UDP from UMP (UMPK route): step 1/1. Its activity is regulated as follows. Allosterically activated by GTP. Inhibited by UTP. In terms of biological role, catalyzes the reversible phosphorylation of UMP to UDP. The protein is Uridylate kinase of Alkaliphilus oremlandii (strain OhILAs) (Clostridium oremlandii (strain OhILAs)).